The primary structure comprises 162 residues: Endoribonuclease YbeY (162 aa).

The Zn(2+) site is built by H128, H132, and H138.

The protein belongs to the endoribonuclease YbeY family. Zn(2+) is required as a cofactor.

The protein localises to the cytoplasm. Its function is as follows. Single strand-specific metallo-endoribonuclease involved in late-stage 70S ribosome quality control and in maturation of the 3' terminus of the 16S rRNA. This chain is Endoribonuclease YbeY, found in Levilactobacillus brevis (strain ATCC 367 / BCRC 12310 / CIP 105137 / JCM 1170 / LMG 11437 / NCIMB 947 / NCTC 947) (Lactobacillus brevis).